A 520-amino-acid chain; its full sequence is Protein U4 (520 aa).

The protein belongs to the herpesviridae U4 family.

In Elephantid herpesvirus 1 (isolate Asian elephant/Berlin/Kiba/1998) (EIHV-1), this protein is Protein U4.